A 505-amino-acid chain; its full sequence is Ribose import ATP-binding protein RbsA 1 (505 aa).

2 ABC transporter domains span residues 13–249 (LALR…VGRD) and 254–503 (YPKQ…TGRA). 45–52 (GENGAGKS) lines the ATP pocket.

Belongs to the ABC transporter superfamily. Ribose importer (TC 3.A.1.2.1) family. As to quaternary structure, the complex is composed of an ATP-binding protein (RbsA), two transmembrane proteins (RbsC) and a solute-binding protein (RbsB).

The protein localises to the cell membrane. It carries out the reaction D-ribose(out) + ATP + H2O = D-ribose(in) + ADP + phosphate + H(+). Part of the ABC transporter complex RbsABC involved in ribose import. Responsible for energy coupling to the transport system. This Streptomyces coelicolor (strain ATCC BAA-471 / A3(2) / M145) protein is Ribose import ATP-binding protein RbsA 1.